The primary structure comprises 226 residues: MAEDDKVFRRARERLVERLKSLGYIRSNRVAEAMLKVPRHEFVPEDLRDRAYVDSPLPIGRGQTISAPHMVAIMTELLDPRPGHKVLEVGAGSGYHAAVVAELVKPDGRVITVERIPELADFARNNLKKTGYDRFVKVLVGDGTKGYPPEAPYDRILVTAGAPDVPESLLEQLKPGGKMVIPVGDRHMQELWLVEKTEDGEIRRRRHGGCAFVPLIGEEGFQEPES.

The active site involves S66.

Belongs to the methyltransferase superfamily. L-isoaspartyl/D-aspartyl protein methyltransferase family.

The protein localises to the cytoplasm. It carries out the reaction [protein]-L-isoaspartate + S-adenosyl-L-methionine = [protein]-L-isoaspartate alpha-methyl ester + S-adenosyl-L-homocysteine. Its function is as follows. Catalyzes the methyl esterification of L-isoaspartyl residues in peptides and proteins that result from spontaneous decomposition of normal L-aspartyl and L-asparaginyl residues. It plays a role in the repair and/or degradation of damaged proteins. The chain is Protein-L-isoaspartate O-methyltransferase from Methanopyrus kandleri (strain AV19 / DSM 6324 / JCM 9639 / NBRC 100938).